A 329-amino-acid chain; its full sequence is GTP 3',8-cyclase (329 aa).

Residues 1 to 229 (MNPVDYLRIS…TAFVQGNGPA (229 aa)) enclose the Radical SAM core domain. Arg8 is a GTP binding site. Residues Cys15 and Cys19 each coordinate [4Fe-4S] cluster. Tyr21 lines the S-adenosyl-L-methionine pocket. Position 22 (Cys22) interacts with [4Fe-4S] cluster. Position 60 (Arg60) interacts with GTP. Gly64 serves as a coordination point for S-adenosyl-L-methionine. Residue Thr91 participates in GTP binding. An S-adenosyl-L-methionine-binding site is contributed by Ser115. GTP is bound at residue Lys155. An S-adenosyl-L-methionine-binding site is contributed by Met189. The [4Fe-4S] cluster site is built by Cys252 and Cys255. 257-259 (RMR) serves as a coordination point for GTP. Residue Cys269 participates in [4Fe-4S] cluster binding.

The protein belongs to the radical SAM superfamily. MoaA family. In terms of assembly, monomer and homodimer. [4Fe-4S] cluster is required as a cofactor.

It catalyses the reaction GTP + AH2 + S-adenosyl-L-methionine = (8S)-3',8-cyclo-7,8-dihydroguanosine 5'-triphosphate + 5'-deoxyadenosine + L-methionine + A + H(+). Its pathway is cofactor biosynthesis; molybdopterin biosynthesis. Functionally, catalyzes the cyclization of GTP to (8S)-3',8-cyclo-7,8-dihydroguanosine 5'-triphosphate. The sequence is that of GTP 3',8-cyclase from Picosynechococcus sp. (strain ATCC 27264 / PCC 7002 / PR-6) (Agmenellum quadruplicatum).